The sequence spans 443 residues: Tubulin beta-3 chain (443 aa).

GTP contacts are provided by Gln11, Glu69, Ser138, Gly142, Thr143, Gly144, Asn204, and Asn226. Glu69 is a Mg(2+) binding site.

Belongs to the tubulin family. Dimer of alpha and beta chains. A typical microtubule is a hollow water-filled tube with an outer diameter of 25 nm and an inner diameter of 15 nM. Alpha-beta heterodimers associate head-to-tail to form protofilaments running lengthwise along the microtubule wall with the beta-tubulin subunit facing the microtubule plus end conferring a structural polarity. Microtubules usually have 13 protofilaments but different protofilament numbers can be found in some organisms and specialized cells. It depends on Mg(2+) as a cofactor.

Its subcellular location is the cytoplasm. It is found in the cytoskeleton. Functionally, tubulin is the major constituent of microtubules, a cylinder consisting of laterally associated linear protofilaments composed of alpha- and beta-tubulin heterodimers. Microtubules grow by the addition of GTP-tubulin dimers to the microtubule end, where a stabilizing cap forms. Below the cap, tubulin dimers are in GDP-bound state, owing to GTPase activity of alpha-tubulin. This chain is Tubulin beta-3 chain (TUB-3), found in Echinococcus multilocularis (Fox tapeworm).